The sequence spans 131 residues: Translation initiation factor 5A (131 aa).

Residue Lys-36 is modified to Hypusine.

This sequence belongs to the eIF-5A family. The N-terminus is blocked.

It is found in the cytoplasm. Its function is as follows. Functions by promoting the formation of the first peptide bond. This chain is Translation initiation factor 5A (eif5a), found in Sulfolobus acidocaldarius (strain ATCC 33909 / DSM 639 / JCM 8929 / NBRC 15157 / NCIMB 11770).